The chain runs to 548 residues: Polynucleotide 5'-hydroxyl-kinase nol-9 (548 aa).

An ATP-binding site is contributed by glycine 186 to serine 193.

Belongs to the Clp1 family. NOL9/GRC3 subfamily.

It is found in the nucleus. The protein localises to the nucleolus. Its function is as follows. Polynucleotide 5'-kinase involved in rRNA processing. The chain is Polynucleotide 5'-hydroxyl-kinase nol-9 (nol-9) from Caenorhabditis briggsae.